A 296-amino-acid polypeptide reads, in one-letter code: L-isoleucine 3(1)-dioxygenase (296 aa).

Fe cation contacts are provided by His-176, Asp-178, and His-267.

Belongs to the iron/ascorbate-dependent oxidoreductase family. Requires L-ascorbate as cofactor. Fe(2+) serves as cofactor.

The catalysed reaction is L-isoleucine + 2-oxoglutarate + O2 = 3(1)-hydroxy-L-isoleucine + succinate + CO2. Its function is as follows. Catalyzes the hydroxylation of L-isoleucine at the C-4' position to form L-4'-hydroxyisoleucine (4'-HIL). Exhibits low activity with L-valine and L-methionine. This Pantoea ananatis (strain AJ13355) protein is L-isoleucine 3(1)-dioxygenase.